The primary structure comprises 114 residues: Probable non-functional T cell receptor beta variable 5-3 (114 aa).

Positions 1–21 (MGPGLLCWELLYLLGAGPVEA) are cleaved as a signal peptide. The Ig-like domain maps to 22–114 (GVTQSPTHLI…SALYLCARSL (93 aa)). A disulfide bridge links Cys-42 with Cys-110. Residue Asn-96 is glycosylated (N-linked (GlcNAc...) asparagine).

Alpha-beta TR is a heterodimer composed of an alpha and beta chain; disulfide-linked. The alpha-beta TR is associated with the transmembrane signaling CD3 coreceptor proteins to form the TR-CD3 (TcR or TCR). The assembly of alpha-beta TR heterodimers with CD3 occurs in the endoplasmic reticulum where a single alpha-beta TR heterodimer associates with one CD3D-CD3E heterodimer, one CD3G-CD3E heterodimer and one CD247 homodimer forming a stable octameric structure. CD3D-CD3E and CD3G-CD3E heterodimers preferentially associate with TR alpha and TR beta chains, respectively. The association of the CD247 homodimer is the last step of TcR assembly in the endoplasmic reticulum and is required for transport to the cell surface.

Its subcellular location is the cell membrane. In terms of biological role, probable non-functional open reading frame (ORF) of V region of the variable domain of T cell receptor (TR) beta chain. Non-functional ORF generally cannot participate in the synthesis of a productive T cell receptor (TR) chain due to altered V-(D)-J or switch recombination and/or splicing site (at mRNA level) and/or conserved amino acid change (protein level). Alpha-beta T cell receptors are antigen specific receptors which are essential to the immune response and are present on the cell surface of T lymphocytes. Recognize peptide-major histocompatibility (MH) (pMH) complexes that are displayed by antigen presenting cells (APC), a prerequisite for efficient T cell adaptive immunity against pathogens. Binding of alpha-beta TR to pMH complex initiates TR-CD3 clustering on the cell surface and intracellular activation of LCK that phosphorylates the ITAM motifs of CD3G, CD3D, CD3E and CD247 enabling the recruitment of ZAP70. In turn ZAP70 phosphorylates LAT, which recruits numerous signaling molecules to form the LAT signalosome. The LAT signalosome propagates signal branching to three major signaling pathways, the calcium, the mitogen-activated protein kinase (MAPK) kinase and the nuclear factor NF-kappa-B (NF-kB) pathways, leading to the mobilization of transcription factors that are critical for gene expression and essential for T cell growth and differentiation. The T cell repertoire is generated in the thymus, by V-(D)-J rearrangement. This repertoire is then shaped by intrathymic selection events to generate a peripheral T cell pool of self-MH restricted, non-autoaggressive T cells. Post-thymic interaction of alpha-beta TR with the pMH complexes shapes TR structural and functional avidity. The protein is Probable non-functional T cell receptor beta variable 5-3 of Homo sapiens (Human).